The sequence spans 202 residues: 3-isopropylmalate dehydratase small subunit (202 aa).

Belongs to the LeuD family. LeuD type 1 subfamily. In terms of assembly, heterodimer of LeuC and LeuD.

The enzyme catalyses (2R,3S)-3-isopropylmalate = (2S)-2-isopropylmalate. It functions in the pathway amino-acid biosynthesis; L-leucine biosynthesis; L-leucine from 3-methyl-2-oxobutanoate: step 2/4. Its function is as follows. Catalyzes the isomerization between 2-isopropylmalate and 3-isopropylmalate, via the formation of 2-isopropylmaleate. In Rhizobium etli (strain ATCC 51251 / DSM 11541 / JCM 21823 / NBRC 15573 / CFN 42), this protein is 3-isopropylmalate dehydratase small subunit.